A 186-amino-acid chain; its full sequence is ADP-ribosylation factor-like protein 8B (186 aa).

An intramembrane region (note=Mediates targeting to membranes) is located at residues 1 to 19; the sequence is MLALISRLLDWFRSLFWKE. Residues 29 to 35, 71 to 75, and 130 to 133 each bind GTP; these read QYSGKTT, DIGGQ, and NKRD. Lys-141 participates in a covalent cross-link: Glycyl lysine isopeptide (Lys-Gly) (interchain with G-Cter in ubiquitin).

The protein belongs to the small GTPase superfamily. Arf family. In terms of assembly, interacts with tubulin. Interacts with BORCS5; recruits ARL8B to lysosomes. Interacts with VPS41; the interaction mediates the recruitment of the HOPS complex to lysosomes. Interacts (GTP-bound form) with PLEKHM2 (via RUN domain); the interaction is required to recruit the motor protein kinesin-1 on lysosomes. Interacts (GTP-bound form) with PLEKHM1 (via RUN domain); the interaction is required for PLEKHM1 localization to lysosomes and for ARL8B function in delivery and degradation of endocytic and autophagic cargo in lysosomes. PLEKHM1 and PLEKHM2 compete for interaction with ARL8B. Interacts (GTP-bound form) with RUFY1; the interaction is required for RUFY1 endosomal location. When GTP-bound, interacts with RUFY3 and RUFY4, but not with RUFY1, nor RUFY2. Ubiquitinated at Lys-141 by RNF167, leading to its degradation.

The protein resides in the late endosome membrane. It is found in the lysosome membrane. Its subcellular location is the cytoplasm. The protein localises to the cytoskeleton. It localises to the spindle. The protein resides in the cell projection. It is found in the axon. Its subcellular location is the synapse. The protein localises to the cytolytic granule membrane. It localises to the early endosome membrane. The catalysed reaction is GTP + H2O = GDP + phosphate + H(+). Functionally, small GTPase which cycles between active GTP-bound and inactive GDP-bound states. In its active state, binds to a variety of effector proteins playing a key role in the regulation of lysosomal positioning which is important for nutrient sensing, natural killer cell-mediated cytotoxicity and antigen presentation. Along with its effectors, orchestrates lysosomal transport and fusion. Localizes specifically to lysosomal membranes and mediates anterograde lysosomal motility by recruiting PLEKHM2, which in turn recruits the motor protein kinesin-1 on lysosomes. Required for lysosomal and cytolytic granule exocytosis. Critical factor involved in NK cell-mediated cytotoxicity. Drives the polarization of cytolytic granules and microtubule-organizing centers (MTOCs) toward the immune synapse between effector NK lymphocytes and target cells. In neurons, mediates the anterograde axonal long-range transport of presynaptic lysosome-related vesicles required for presynaptic biogenesis and synaptic function. Also acts as a regulator of endosome to lysosome trafficking pathways of special significance for host defense. Recruits RUFY1 onto early endosomes regulating endosomes to trans-Golgi network proteins retrieval. Regulates cargo trafficking to lysosomes by binding to PLEKHM1 and recruiting the HOPS subunit VPS41, resulting in functional assembly of the HOPS complex on lysosomal membranes. Plays an important role in cargo delivery to lysosomes for antigen presentation and microbial killing. Directs the intersection of CD1d with lipid antigens in lysosomes, and plays a role in intersecting phagosomes with lysosomes to generate phagolysosomes that kill microbes. Involved in the process of MHC II presentation. Regulates the delivery of antigens to lysosomes and the formation of MHC II-peptide complexes through the recruitment of the HOPS complex to lysosomes allowing the fusion of late endosomes to lysosomes. May play a role in chromosome segregation. This chain is ADP-ribosylation factor-like protein 8B (ARL8B), found in Bos taurus (Bovine).